Here is a 225-residue protein sequence, read N- to C-terminus: PKHD-type hydroxylase YbiX (225 aa).

In terms of domain architecture, Fe2OG dioxygenase spans 78–177 (TLSTPLFNRY…RVASFMWIQS (100 aa)). Residues His-96, Asp-98, and His-158 each coordinate Fe cation. A 2-oxoglutarate-binding site is contributed by Arg-168.

It depends on Fe(2+) as a cofactor. The cofactor is L-ascorbate.

This Shigella sonnei (strain Ss046) protein is PKHD-type hydroxylase YbiX.